Reading from the N-terminus, the 413-residue chain is Glutamyl-tRNA reductase (413 aa).

Substrate is bound by residues 57 to 60, serine 113, 118 to 120, and glutamine 124; these read TCNR and DFE. Cysteine 58 serves as the catalytic Nucleophile. Position 193-198 (193-198) interacts with NADP(+); the sequence is GTGKIG.

Belongs to the glutamyl-tRNA reductase family. As to quaternary structure, homodimer.

It catalyses the reaction (S)-4-amino-5-oxopentanoate + tRNA(Glu) + NADP(+) = L-glutamyl-tRNA(Glu) + NADPH + H(+). The protein operates within porphyrin-containing compound metabolism; protoporphyrin-IX biosynthesis; 5-aminolevulinate from L-glutamyl-tRNA(Glu): step 1/2. Functionally, catalyzes the NADPH-dependent reduction of glutamyl-tRNA(Glu) to glutamate 1-semialdehyde (GSA). This is Glutamyl-tRNA reductase from Flavobacterium psychrophilum (strain ATCC 49511 / DSM 21280 / CIP 103535 / JIP02/86).